The sequence spans 470 residues: Glycine--tRNA ligase (470 aa).

Substrate-binding residues include R94 and E183. ATP-binding positions include 215–217 (RNE), 225–230 (FRMVEF), 298–299 (EI), and 342–345 (GCDR). Residue 230 to 234 (FEQME) participates in substrate binding. Position 338-342 (338-342 (ETSSG)) interacts with substrate.

This sequence belongs to the class-II aminoacyl-tRNA synthetase family. Homodimer.

The protein resides in the cytoplasm. It carries out the reaction tRNA(Gly) + glycine + ATP = glycyl-tRNA(Gly) + AMP + diphosphate. Functionally, catalyzes the attachment of glycine to tRNA(Gly). This chain is Glycine--tRNA ligase, found in Chlorobaculum tepidum (strain ATCC 49652 / DSM 12025 / NBRC 103806 / TLS) (Chlorobium tepidum).